Consider the following 148-residue polypeptide: uncharacterized protein (148 aa).

Residues 1–17 (MCPPVRQRPAQAPPAKR) show a composition bias toward low complexity. Disordered stretches follow at residues 1-86 (MCPP…VQSP) and 122-148 (RAHR…TSPC). The segment covering 38 to 57 (RPPKMQRRPRPPVAKRRRFP) has biased composition (basic residues). Positions 134–148 (QSRQRPSPDSQTSPC) are enriched in polar residues.

This sequence belongs to the Epstein-Barr virus BLLF2 family.

This is an uncharacterized protein from Homo sapiens (Human).